We begin with the raw amino-acid sequence, 111 residues long: Colipase (111 aa).

Residues 1–16 (MKVLVLLLVTLAVVYA) form the signal peptide. Positions 17–21 (APDPR) are cleaved as a propeptide — enterostatin, activation peptide. 5 disulfide bridges follow: cysteine 33–cysteine 44, cysteine 39–cysteine 55, cysteine 43–cysteine 77, cysteine 65–cysteine 85, and cysteine 79–cysteine 103.

Belongs to the colipase family. Forms a 1:1 stoichiometric complex with pancreatic lipase. In terms of tissue distribution, expressed by the pancreas.

Its subcellular location is the secreted. Functionally, colipase is a cofactor of pancreatic lipase. It allows the lipase to anchor itself to the lipid-water interface. Without colipase the enzyme is washed off by bile salts, which have an inhibitory effect on the lipase. In terms of biological role, enterostatin has a biological activity as a satiety signal. The sequence is that of Colipase (CLPS) from Ictidomys tridecemlineatus (Thirteen-lined ground squirrel).